Reading from the N-terminus, the 236-residue chain is tRNA1(Val) (adenine(37)-N6)-methyltransferase (236 aa).

This sequence belongs to the methyltransferase superfamily. tRNA (adenine-N(6)-)-methyltransferase family.

Its subcellular location is the cytoplasm. The catalysed reaction is adenosine(37) in tRNA1(Val) + S-adenosyl-L-methionine = N(6)-methyladenosine(37) in tRNA1(Val) + S-adenosyl-L-homocysteine + H(+). Specifically methylates the adenine in position 37 of tRNA(1)(Val) (anticodon cmo5UAC). In Actinobacillus pleuropneumoniae serotype 7 (strain AP76), this protein is tRNA1(Val) (adenine(37)-N6)-methyltransferase.